Consider the following 86-residue polypeptide: Large ribosomal subunit protein bL27 (86 aa).

The interval 1–22 (MAHKKAGGSTRNGRDSESKRLG) is disordered.

It belongs to the bacterial ribosomal protein bL27 family.

The sequence is that of Large ribosomal subunit protein bL27 from Vibrio cholerae serotype O1 (strain ATCC 39315 / El Tor Inaba N16961).